A 768-amino-acid polypeptide reads, in one-letter code: Ral guanine nucleotide dissociation stimulator-like 1 (768 aa).

The N-terminal Ras-GEF domain occupies 65 to 196 (KIRTIKAGTL…RAQNLLEQFQ (132 aa)). A Ras-GEF domain is found at 232 to 501 (SEDLVAEQLT…YALSCEIEAA (270 aa)). Position 520 is a phosphoserine (serine 520). The interval 528–623 (MITSPTPTKE…PPSCNNNPKI (96 aa)) is disordered. Composition is skewed to low complexity over residues 541 to 561 (STAS…SCES), 586 to 596 (ESSSSCSSIHS), and 605 to 621 (SSLI…NNNP). The Ras-associating domain maps to 648-735 (DTCIIRISVE…FDFILRKKNS (88 aa)).

In terms of assembly, interacts with Ras. As to expression, expressed in a wide variety of tissues with strong expression being seen in the heart, brain, kidney, spleen and testis.

In terms of biological role, probable guanine nucleotide exchange factor. This Homo sapiens (Human) protein is Ral guanine nucleotide dissociation stimulator-like 1 (RGL1).